A 599-amino-acid chain; its full sequence is Translation initiation factor IF-2 (599 aa).

Positions 111 to 278 (PRPPIITVMG…SILLLAEILE (168 aa)) constitute a tr-type G domain. The segment at 120–127 (GHVDHGKT) is G1. Residue 120–127 (GHVDHGKT) coordinates GTP. Residues 145–149 (GITQH) form a G2 region. The segment at 166-169 (DTPG) is G3. Residues 166 to 170 (DTPGH) and 220 to 223 (NKMD) each bind GTP. A G4 region spans residues 220-223 (NKMD). The interval 256–258 (SAL) is G5.

It belongs to the TRAFAC class translation factor GTPase superfamily. Classic translation factor GTPase family. IF-2 subfamily.

The protein resides in the cytoplasm. One of the essential components for the initiation of protein synthesis. Protects formylmethionyl-tRNA from spontaneous hydrolysis and promotes its binding to the 30S ribosomal subunits. Also involved in the hydrolysis of GTP during the formation of the 70S ribosomal complex. This chain is Translation initiation factor IF-2, found in Mesomycoplasma hyopneumoniae (strain 232) (Mycoplasma hyopneumoniae).